Reading from the N-terminus, the 668-residue chain is DNA ligase (668 aa).

Residues 35 to 39 and 83 to 84 each bind NAD(+); these read DKEYD and SL. The active-site N6-AMP-lysine intermediate is K125. Residues R147, E181, and K317 each coordinate NAD(+). The Zn(2+) site is built by C410, C413, C426, and C432. Residues 591 to 668 form the BRCT domain; that stretch reads KKDNKFNGKT…TEEEFNEMIN (78 aa).

Belongs to the NAD-dependent DNA ligase family. LigA subfamily. The cofactor is Mg(2+). It depends on Mn(2+) as a cofactor.

The catalysed reaction is NAD(+) + (deoxyribonucleotide)n-3'-hydroxyl + 5'-phospho-(deoxyribonucleotide)m = (deoxyribonucleotide)n+m + AMP + beta-nicotinamide D-nucleotide.. In terms of biological role, DNA ligase that catalyzes the formation of phosphodiester linkages between 5'-phosphoryl and 3'-hydroxyl groups in double-stranded DNA using NAD as a coenzyme and as the energy source for the reaction. It is essential for DNA replication and repair of damaged DNA. The protein is DNA ligase of Clostridium tetani (strain Massachusetts / E88).